Here is a 485-residue protein sequence, read N- to C-terminus: NADH-quinone oxidoreductase subunit N (485 aa).

The next 14 membrane-spanning stretches (helical) occupy residues 8–28 (LIAL…MLSI), 35–55 (FLNA…LWFV), 71–91 (GFAM…CTFA), 105–125 (FYLL…ANHL), 127–147 (ALFL…GYAF), 159–179 (YTIL…LVYA), 203–223 (LLAG…LVPF), 235–255 (PAPV…GVVM), 271–291 (VVLG…ALSQ), 297–317 (LLGY…IVLQ), 326–346 (VGVY…VVSL), 373–393 (AAVM…LGFI), 408–430 (WWLV…RVAV), and 455–475 (IVVL…QPLI).

This sequence belongs to the complex I subunit 2 family. In terms of assembly, NDH-1 is composed of 13 different subunits. Subunits NuoA, H, J, K, L, M, N constitute the membrane sector of the complex.

The protein resides in the cell inner membrane. It catalyses the reaction a quinone + NADH + 5 H(+)(in) = a quinol + NAD(+) + 4 H(+)(out). Its function is as follows. NDH-1 shuttles electrons from NADH, via FMN and iron-sulfur (Fe-S) centers, to quinones in the respiratory chain. The immediate electron acceptor for the enzyme in this species is believed to be ubiquinone. Couples the redox reaction to proton translocation (for every two electrons transferred, four hydrogen ions are translocated across the cytoplasmic membrane), and thus conserves the redox energy in a proton gradient. The polypeptide is NADH-quinone oxidoreductase subunit N (Salmonella choleraesuis (strain SC-B67)).